A 211-amino-acid chain; its full sequence is Ribonuclease HII (211 aa).

The RNase H type-2 domain maps to 24-211 (QLIAGVDEVG…KPVKKALGLD (188 aa)). Residues aspartate 30, glutamate 31, and aspartate 122 each contribute to the a divalent metal cation site.

This sequence belongs to the RNase HII family. Mn(2+) is required as a cofactor. Mg(2+) serves as cofactor.

It is found in the cytoplasm. The enzyme catalyses Endonucleolytic cleavage to 5'-phosphomonoester.. Functionally, endonuclease that specifically degrades the RNA of RNA-DNA hybrids. This is Ribonuclease HII from Vibrio parahaemolyticus serotype O3:K6 (strain RIMD 2210633).